Consider the following 1077-residue polypeptide: Zinc finger protein 518B (1077 aa).

Residues 9 to 30 are compositionally biased toward polar residues; the sequence is YTTQVNGGPSSLTMSPKQPNRA. A disordered region spans residues 9–35; sequence YTTQVNGGPSSLTMSPKQPNRATRTER. 2 C2H2-type zinc fingers span residues 160-182 and 188-211; these read FICSHCSYISYTKGEFQRHLVKH and YRCEYCDYGAIRNDYIVKHRRRVH. Positions 372–397 are disordered; the sequence is TSRGDGGTSECLSTEKGSGGQKKMLS. Lys479 participates in a covalent cross-link: Glycyl lysine isopeptide (Lys-Gly) (interchain with G-Cter in SUMO2). 4 disordered regions span residues 561–585, 599–622, 675–739, and 825–852; these read LVSSDRKLEDKQMESKAVGNTGQVS, GEDKPRSQQPGDQPGQPKTSETAG, KPSS…GSRQ, and QPLTCRSGPADMSPGLETSLRPKSRKED. The span at 564-574 shows a compositional bias: basic and acidic residues; that stretch reads SDRKLEDKQME. 2 stretches are compositionally biased toward polar residues: residues 605–621 and 675–688; these read SQQPGDQPGQPKTSETA and KPSSLSANSAQRRS. Glycyl lysine isopeptide (Lys-Gly) (interchain with G-Cter in SUMO2) cross-links involve residues Lys847 and Lys861. The segment at 895–914 is disordered; it reads QVNSTKKKNKMQANPGRYFK. Residues 1039–1061 form a C2H2-type 3 zinc finger; sequence FKCWFCGRLYEDQEEWMSHGQRH.

It belongs to the krueppel C2H2-type zinc-finger protein family.

It localises to the nucleus. Functionally, through its association with the EHMT1-EHMT2/G9A and PRC2/EED-EZH2 histone methyltransferase complexes may function in gene silencing, regulating repressive post-translational methylation of histone tails at promoters of target genes. The chain is Zinc finger protein 518B (Znf518b) from Mus musculus (Mouse).